The sequence spans 980 residues: Ovochymase-2 (980 aa).

The first 21 residues, 1–21 (MAETSVFSIMMLTVMTAVGRG), serve as a signal peptide directing secretion. A propeptide spans 22-49 (ATDRPGRVSRCGERPSANASVTYNLLSR) (activation peptide). An N-linked (GlcNAc...) asparagine glycan is attached at Asn39. Residues 50-299 (IVGGTSAVKG…LLNWLSANLN (250 aa)) form the Peptidase S1 1 domain. Cysteines 75 and 91 form a disulfide. Catalysis depends on His90, which acts as the Charge relay system. Residues Val112 and Glu117 each coordinate Ca(2+). Asp140 functions as the Charge relay system in the catalytic mechanism. 11 disulfides stabilise this stretch: Cys174–Cys244, Cys205–Cys223, Cys234–Cys263, Cys312–Cys342, Cys369–Cys388, Cys435–Cys462, Cys489–Cys510, Cys618–Cys634, Cys716–Cys779, Cys744–Cys757, and Cys769–Cys798. Ser238 (charge relay system) is an active-site residue. CUB domains lie at 312–425 (CSTN…YQAV) and 435–547 (CGSV…ISFV). The 230-residue stretch at 593-822 (IIKAEEAMPN…FIPWIMETIL (230 aa)) folds into the Peptidase S1 2 domain. The propeptide at 593–980 (IIKAEEAMPN…WLSYSFHNQN (388 aa)) is activation peptide. The N-linked (GlcNAc...) asparagine glycan is linked to Asn766. A disordered region spans residues 835 to 863 (HHPLIPPDKLSQEKALLPDSPPSNDSSSS). 2 N-linked (GlcNAc...) asparagine glycosylation sites follow: Asn858 and Asn932.

Belongs to the peptidase S1 family. Post-translationally, the catalytically inactive 108 kDa form is processed both N- and C-terminally to give rise to catalytically active and inactive forms. Differentially expressed in the oviductal pars recta (PR) region.

The protein resides in the secreted. It carries out the reaction Preferential cleavage at 371-Gly-Ser-Arg-|-Trp-374 of glycoprotein gp43 in Xenopus laevis coelemic egg envelope to yield gp41.. Its function is as follows. Mediates gamete interaction by affecting the vitelline coat. This Rhinella arenarum (Argentine common toad) protein is Ovochymase-2 (OVCH2).